The chain runs to 228 residues: 7-cyano-7-deazaguanine synthase (228 aa).

ATP is bound at residue 9 to 19 (LSGGPDSTTVL). The Zn(2+) site is built by cysteine 193, cysteine 203, cysteine 206, and cysteine 209.

This sequence belongs to the QueC family. It depends on Zn(2+) as a cofactor.

The enzyme catalyses 7-carboxy-7-deazaguanine + NH4(+) + ATP = 7-cyano-7-deazaguanine + ADP + phosphate + H2O + H(+). It functions in the pathway purine metabolism; 7-cyano-7-deazaguanine biosynthesis. Functionally, catalyzes the ATP-dependent conversion of 7-carboxy-7-deazaguanine (CDG) to 7-cyano-7-deazaguanine (preQ(0)). This Rickettsia peacockii (strain Rustic) protein is 7-cyano-7-deazaguanine synthase.